The primary structure comprises 225 residues: Phosphoribosyltransferase domain-containing protein 1 (225 aa).

Residue alanine 2 is modified to N-acetylalanine. Mg(2+)-binding residues include glutamate 141 and aspartate 142. GMP is bound by residues glutamate 141 to threonine 149, lysine 173, phenylalanine 194 to valine 195, and aspartate 201. Residue aspartate 201 coordinates Mg(2+).

The protein belongs to the purine/pyrimidine phosphoribosyltransferase family. Homodimer.

Has low, barely detectable phosphoribosyltransferase activity (in vitro). Binds GMP, IMP and alpha-D-5-phosphoribosyl 1-pyrophosphate (PRPP). Is not expected to contribute to purine metabolism or GMP salvage. In Homo sapiens (Human), this protein is Phosphoribosyltransferase domain-containing protein 1 (PRTFDC1).